The sequence spans 260 residues: Proteasome subunit alpha (260 aa).

The segment covering 237–248 (ASTDAPAAAADS) has biased composition (low complexity). A disordered region spans residues 237–260 (ASTDAPAAAADSADVEERPDSEAP). A compositionally biased stretch (basic and acidic residues) spans 251–260 (VEERPDSEAP).

The protein belongs to the peptidase T1A family. As to quaternary structure, the 20S proteasome core is composed of 14 alpha and 14 beta subunits that assemble into four stacked heptameric rings, resulting in a barrel-shaped structure. The two inner rings, each composed of seven catalytic beta subunits, are sandwiched by two outer rings, each composed of seven alpha subunits. The catalytic chamber with the active sites is on the inside of the barrel. Has a gated structure, the ends of the cylinder being occluded by the N-termini of the alpha-subunits. Is capped by the proteasome-associated ATPase, ARC.

The protein resides in the cytoplasm. The protein operates within protein degradation; proteasomal Pup-dependent pathway. With respect to regulation, the formation of the proteasomal ATPase ARC-20S proteasome complex, likely via the docking of the C-termini of ARC into the intersubunit pockets in the alpha-rings, may trigger opening of the gate for substrate entry. Interconversion between the open-gate and close-gate conformations leads to a dynamic regulation of the 20S proteasome proteolysis activity. Component of the proteasome core, a large protease complex with broad specificity involved in protein degradation. The chain is Proteasome subunit alpha from Salinispora tropica (strain ATCC BAA-916 / DSM 44818 / JCM 13857 / NBRC 105044 / CNB-440).